A 255-amino-acid chain; its full sequence is Acetylglutamate kinase (255 aa).

Residues 40–41 (GG), Arg62, and Asn153 contribute to the substrate site.

This sequence belongs to the acetylglutamate kinase family. ArgB subfamily.

It localises to the cytoplasm. The enzyme catalyses N-acetyl-L-glutamate + ATP = N-acetyl-L-glutamyl 5-phosphate + ADP. The protein operates within amino-acid biosynthesis; L-arginine biosynthesis; N(2)-acetyl-L-ornithine from L-glutamate: step 2/4. In terms of biological role, catalyzes the ATP-dependent phosphorylation of N-acetyl-L-glutamate. The chain is Acetylglutamate kinase from Bacillus thuringiensis subsp. konkukian (strain 97-27).